A 249-amino-acid chain; its full sequence is Methionine aminopeptidase (249 aa).

Residue H77 participates in substrate binding. A divalent metal cation-binding residues include D94, D105, and H168. H175 is a substrate binding site. Residues E201 and E232 each coordinate a divalent metal cation.

It belongs to the peptidase M24A family. Methionine aminopeptidase type 1 subfamily. As to quaternary structure, monomer. Co(2+) is required as a cofactor. The cofactor is Zn(2+). It depends on Mn(2+) as a cofactor. Requires Fe(2+) as cofactor.

It carries out the reaction Release of N-terminal amino acids, preferentially methionine, from peptides and arylamides.. Functionally, removes the N-terminal methionine from nascent proteins. The N-terminal methionine is often cleaved when the second residue in the primary sequence is small and uncharged (Met-Ala-, Cys, Gly, Pro, Ser, Thr, or Val). Requires deformylation of the N(alpha)-formylated initiator methionine before it can be hydrolyzed. This is Methionine aminopeptidase from Clostridium perfringens (strain 13 / Type A).